Consider the following 96-residue polypeptide: Integration host factor subunit beta (96 aa).

This sequence belongs to the bacterial histone-like protein family. Heterodimer of an alpha and a beta chain.

In terms of biological role, this protein is one of the two subunits of integration host factor, a specific DNA-binding protein that functions in genetic recombination as well as in transcriptional and translational control. The sequence is that of Integration host factor subunit beta from Methylocella silvestris (strain DSM 15510 / CIP 108128 / LMG 27833 / NCIMB 13906 / BL2).